Here is a 264-residue protein sequence, read N- to C-terminus: LIMR family protein SELMODRAFT_416716 (264 aa).

The next 4 helical transmembrane spans lie at 23 to 43, 96 to 116, 194 to 214, and 225 to 245; these read VVIL…VIGY, ILFT…LIFA, IIWL…FPFL, and WGLL…MSVI.

This sequence belongs to the LIMR family.

It localises to the membrane. In Selaginella moellendorffii (Spikemoss), this protein is LIMR family protein SELMODRAFT_416716.